The sequence spans 1032 residues: Calmodulin-binding transcription activator 3 (1032 aa).

A DNA-binding region (CG-1) is located at residues valine 15 to serine 141. Residues arginine 146–histidine 197 are disordered. The span at cysteine 174–glycine 195 shows a compositional bias: polar residues. Residue serine 272 is modified to Phosphoserine. ANK repeat units lie at residues glycine 661 to phenylalanine 690, asparagine 694 to threonine 723, and serine 733 to valine 762. IQ domains lie at valine 852–lysine 881 and threonine 875–valine 904. The interval tryptophan 900 to phenylalanine 922 is calmodulin-binding. Residues lysine 945–glutamate 987 are a coiled coil. Serine 964 bears the Phosphoserine mark.

This sequence belongs to the CAMTA family. Interacts with SR1IP1. Interacts with DSC1. Post-translationally, ubiquinated during pathogen infection. Ubiquitination leads to its subsequent proteasome-dependent degradation, thus allowing the establishment of plant defense response. In terms of tissue distribution, expressed in roots, stems, leaves, carpels, and siliques, but not in stigmas or other parts of the flower.

It is found in the nucleus. Functionally, transcription activator that binds to the DNA consensus sequence 5'-[ACG]CGCG[GTC]-3'. Binds calmodulin in a calcium-dependent manner in vitro. Regulates transcriptional activity in response to calcium signals. Involved in freezing tolerance in association with CAMTA1 and CAMTA2. Required for the cold-induced expression of DREB1B/CBF1, DREB1C/CBF2, ZAT12 and GOLS3. Involved in response to cold. Contributes together with CAMTA5 to the positive regulation of the cold-induced expression of DREB1A/CBF3, DREB1B/CBF1 and DREB1C/CBF2. Involved together with CAMTA2 and CAMTA4 in the positive regulation of a general stress response (GSR). Involved in the regulation of GSR amplitude downstream of MEKK1. Involved in the regulation of a set of genes involved in defense responses against pathogens. Involved in the regulation of both basal resistance and systemic acquired resistance (SAR). Acts as negative regulator of plant immunity. Binds to the promoter of the defense-related gene EDS1 and represses its expression. Binds to the promoter of the defense-related gene NDR1 and represses its expression. Involved in defense against insects. Required for tolerance to the generalist herbivore Trichoplusia ni, and contributes to the positive regulation of genes associated with glucosinolate metabolism. Required for tolerance to Bradysia impatiens larvae. Mediates herbivore-induced wound response. Required for wound-induced jasmonate accumulation. Involved in the regulation of ethylene-induced senescence by binding to the promoter of the senescence-inducer gene EIN3 and repressing its expression. In Arabidopsis thaliana (Mouse-ear cress), this protein is Calmodulin-binding transcription activator 3.